A 333-amino-acid chain; its full sequence is UPF0324 membrane protein WS2204 (333 aa).

Transmembrane regions (helical) follow at residues 4 to 26, 31 to 53, 59 to 81, 88 to 110, 125 to 147, 154 to 176, 218 to 240, 253 to 275, and 310 to 332; these read SIRPFVLGIALCTLIGIVAFGLA, FLSLHLSPLILSVLVGMALAPWY, IGIIGVLWCGKRLLRLGIVLFGF, LLGVGVEGFLIALLVVAGIFTLG, SMLIACGSAVCGAAAILALESLS, TAIAVGVVVLFGLLSMFLYPLVY, VIVKMIRVILLVPLLLLLSFTIL, PWFALLFLGAILLGSLFFFPSWL, and ALALGAILWGVLLFGGLGLVKLL.

Belongs to the UPF0324 family.

The protein localises to the cell membrane. This chain is UPF0324 membrane protein WS2204, found in Wolinella succinogenes (strain ATCC 29543 / DSM 1740 / CCUG 13145 / JCM 31913 / LMG 7466 / NCTC 11488 / FDC 602W) (Vibrio succinogenes).